The sequence spans 439 residues: MAEYFKDIPKVKFEGTSSDNPLAFRHYNPEELVLGKSMKEHLRLAACYWHNFCWDGADVFGAGTFNRPWLQAGDAMQRAKEKADVAFEFFSKLNIPYYCFHDVDVSPEGNSIKEYINNFAQMTDVLEAKQEETGLKLLWGTANLFSNPRYASGAASSPNPEVFTYGATQVMHAMNATKRLGGENYVLWGGREGYETLLNTDLRQEREQLGRFMNMVVEHKHKIGFKGLLLIEPKPQEPTKHQYDYDTATVYGFLKQYGLENEFKVNIEANHATLAGHSFQHEVATAISLGLFGSIDANRGDPQLGWDTDQFPNSVEELSLVIYEILKAGGFTSGGFNFDTKLRRQSSDPQDMFIAHIGGMDHLAIGLKKAALMIENDFLGQAVSKRYAGWNGELGKGIQGGDFNLESLANLCVDKNLQPKHVSGQQELLENKVNNVLYG.

Residues H101 and D104 contribute to the active site. Mg(2+) is bound by residues E232, E268, H271, D296, D307, D309, and D339.

It belongs to the xylose isomerase family. As to quaternary structure, homotetramer. Requires Mg(2+) as cofactor.

It localises to the cytoplasm. The enzyme catalyses alpha-D-xylose = alpha-D-xylulofuranose. The chain is Xylose isomerase from Pseudoalteromonas atlantica (strain T6c / ATCC BAA-1087).